Consider the following 331-residue polypeptide: tRNA U34 carboxymethyltransferase (331 aa).

Carboxy-S-adenosyl-L-methionine is bound by residues Lys-91, Trp-105, Lys-110, Gly-130, 152 to 154 (DPS), 181 to 182 (IE), Met-196, Tyr-200, and Arg-315.

The protein belongs to the class I-like SAM-binding methyltransferase superfamily. CmoB family. In terms of assembly, homotetramer.

The enzyme catalyses carboxy-S-adenosyl-L-methionine + 5-hydroxyuridine(34) in tRNA = 5-carboxymethoxyuridine(34) in tRNA + S-adenosyl-L-homocysteine + H(+). In terms of biological role, catalyzes carboxymethyl transfer from carboxy-S-adenosyl-L-methionine (Cx-SAM) to 5-hydroxyuridine (ho5U) to form 5-carboxymethoxyuridine (cmo5U) at position 34 in tRNAs. This Shewanella baltica (strain OS155 / ATCC BAA-1091) protein is tRNA U34 carboxymethyltransferase.